Reading from the N-terminus, the 91-residue chain is Early E3B 10.4 kDa protein (91 aa).

A signal peptide spans 1 to 21; the sequence is MVTVLLIFLCLPVIFSSSTFA. Residues 22 to 33 are Lumenal-facing; the sequence is AVSDLDPECLAP. The helical transmembrane segment at 34–56 threads the bilayer; that stretch reads FAVYLIFTFVTATCVCSIITLLI. Over 57–91 the chain is Cytoplasmic; sequence TSLQFFDYYYVRIVYRRHHPRYQNPQIAALLQLQP.

Belongs to the adenoviridae E3B family.

The protein resides in the host endoplasmic reticulum membrane. Functionally, down-regulates the EGF receptor. The sequence is that of Early E3B 10.4 kDa protein from Homo sapiens (Human).